The primary structure comprises 947 residues: DNA topoisomerase 1 (947 aa).

The Toprim domain occupies 16–140 (RRLVIVESPT…VKRMVFHEIT (125 aa)). The Mg(2+) site is built by glutamate 22 and aspartate 109. A Topo IA-type catalytic domain is found at 155-614 (DIDLVDAQET…FYFGGNHGVS (460 aa)). The interval 189–194 (SAGRVQ) is interaction with DNA. The active-site O-(5'-phospho-DNA)-tyrosine intermediate is tyrosine 343. Disordered regions lie at residues 733 to 771 (VLPK…GSLL), 846 to 888 (KRAG…GETN), and 910 to 947 (ADRR…QSPR). Positions 915 to 934 (RGPVKRPAKKARKVPAKKAA) are enriched in basic residues.

The protein belongs to the type IA topoisomerase family. Monomer. Requires Mg(2+) as cofactor.

It catalyses the reaction ATP-independent breakage of single-stranded DNA, followed by passage and rejoining.. In terms of biological role, releases the supercoiling and torsional tension of DNA, which is introduced during the DNA replication and transcription, by transiently cleaving and rejoining one strand of the DNA duplex. Introduces a single-strand break via transesterification at a target site in duplex DNA. The scissile phosphodiester is attacked by the catalytic tyrosine of the enzyme, resulting in the formation of a DNA-(5'-phosphotyrosyl)-enzyme intermediate and the expulsion of a 3'-OH DNA strand. The free DNA strand then undergoes passage around the unbroken strand, thus removing DNA supercoils. Finally, in the religation step, the DNA 3'-OH attacks the covalent intermediate to expel the active-site tyrosine and restore the DNA phosphodiester backbone. The polypeptide is DNA topoisomerase 1 (Mycobacterium leprae (strain TN)).